Here is a 440-residue protein sequence, read N- to C-terminus: 3-phosphoshikimate 1-carboxyvinyltransferase (440 aa).

3-phosphoshikimate-binding residues include lysine 25, serine 26, and arginine 30. Phosphoenolpyruvate is bound at residue lysine 25. Residues glycine 96 and arginine 124 each contribute to the phosphoenolpyruvate site. The 3-phosphoshikimate site is built by serine 168, glutamine 169, aspartate 310, and lysine 337. Glutamine 169 lines the phosphoenolpyruvate pocket. Residue aspartate 310 is the Proton acceptor of the active site. Residues arginine 341, arginine 382, and lysine 409 each coordinate phosphoenolpyruvate.

Belongs to the EPSP synthase family. Monomer.

The protein localises to the cytoplasm. It carries out the reaction 3-phosphoshikimate + phosphoenolpyruvate = 5-O-(1-carboxyvinyl)-3-phosphoshikimate + phosphate. The protein operates within metabolic intermediate biosynthesis; chorismate biosynthesis; chorismate from D-erythrose 4-phosphate and phosphoenolpyruvate: step 6/7. In terms of biological role, catalyzes the transfer of the enolpyruvyl moiety of phosphoenolpyruvate (PEP) to the 5-hydroxyl of shikimate-3-phosphate (S3P) to produce enolpyruvyl shikimate-3-phosphate and inorganic phosphate. The protein is 3-phosphoshikimate 1-carboxyvinyltransferase of Chlamydia trachomatis serovar D (strain ATCC VR-885 / DSM 19411 / UW-3/Cx).